The sequence spans 181 residues: MKATRLAIPDVILFEPRVFGDDRGFFFESYNQRAFEEACGHPVSFVQDNHSRSARGVLRGLHYQIRQAQGKLVRATLGEVFDVAVDLRRGSPTFGQWVGERLSAENKRQMWIPAGFAHGFVVLSEYAEFLYKTTDFWAPEHERCIVWNDPELKIDWPLQDAPLLSEKDRQGKAFADADCFP.

Residues arginine 23, glutamate 28, 47 to 49 (QDN), and arginine 59 each bind substrate. Histidine 62 (proton acceptor) is an active-site residue. Substrate-binding residues include lysine 71 and histidine 118. Tyrosine 131 (proton donor) is an active-site residue. Substrate contacts are provided by glutamate 142 and lysine 167.

This sequence belongs to the dTDP-4-dehydrorhamnose 3,5-epimerase family. Homodimer.

The catalysed reaction is dTDP-4-dehydro-6-deoxy-alpha-D-glucose = dTDP-4-dehydro-beta-L-rhamnose. It participates in carbohydrate biosynthesis; dTDP-L-rhamnose biosynthesis. Its pathway is bacterial outer membrane biogenesis; lipopolysaccharide biosynthesis. Its function is as follows. Catalyzes the epimerization of the C3' and C5'positions of dTDP-6-deoxy-D-xylo-4-hexulose, forming dTDP-6-deoxy-L-lyxo-4-hexulose. The polypeptide is dTDP-4-dehydrorhamnose 3,5-epimerase (rmlC) (Pseudomonas aeruginosa (strain ATCC 15692 / DSM 22644 / CIP 104116 / JCM 14847 / LMG 12228 / 1C / PRS 101 / PAO1)).